The primary structure comprises 128 residues: Glycine cleavage system H protein (128 aa).

The Lipoyl-binding domain occupies 24–106; the sequence is VYTVGITEHA…YAEGFLFQIK (83 aa). The residue at position 65 (lysine 65) is an N6-lipoyllysine.

This sequence belongs to the GcvH family. In terms of assembly, the glycine cleavage system is composed of four proteins: P, T, L and H. (R)-lipoate serves as cofactor.

Functionally, the glycine cleavage system catalyzes the degradation of glycine. The H protein shuttles the methylamine group of glycine from the P protein to the T protein. In Serratia proteamaculans (strain 568), this protein is Glycine cleavage system H protein.